We begin with the raw amino-acid sequence, 1394 residues long: Leucine-rich PPR motif-containing protein, mitochondrial (1394 aa).

The transit peptide at 1–59 (MAALLRSARWLLRAGAAPRLPLSLRLLPGGPGRLHAASYLPAARAGPVAGGLLSPARLY) directs the protein to the mitochondrion. 8 PPR repeats span residues 126-160 (LLRS…GAVY), 161-195 (DVSH…NIQP), 196-230 (NRVT…DLPV), 231-265 (TEAV…GIEP), 266-300 (GPDT…ELHL), 301-335 (MDRD…RRYI), 403-437 (HSFP…GFPI), and 438-472 (RPHY…GVHP). N6-acetyllysine occurs at positions 155, 187, and 226. Residue Lys292 is modified to N6-acetyllysine. An N6-acetyllysine mark is found at Lys463 and Lys613. 6 PPR repeats span residues 678–709 (IRDV…ESDM), 710–746 (VTGG…SAVL), 747–784 (DTGK…IKDT), 785–820 (TALS…LAEP), 821–856 (STNI…KVLP), and 954–988 (RDQM…NVIP). The tract at residues 712 to 1067 (GGYAALINLC…AKEQNIVFNA (356 aa)) is interaction with BECN1 and Aedes aegypti venom allergen-1. An N6-acetyllysine mark is found at Lys726 and Lys750. 3 positions are modified to phosphoserine: Ser1026, Ser1027, and Ser1029. PPR repeat units follow at residues 1031–1065 (TEPD…NIVF), 1066–1102 (NAET…GFTL), 1103–1137 (NDAA…QQTP), 1138–1175 (SRLA…IGLS), 1176–1210 (KMVF…ENKV), and 1317–1351 (KEEA…NTKL). Positions 1121–1394 (KEAVTTLKTV…QLRKLRENSS (274 aa)) are RNA-binding. At Thr1136 the chain carries Phosphothreonine. Position 1138 is a phosphoserine (Ser1138).

In terms of assembly, component of mRNP complexes associated with HNRPA1. Component of the complex, at least composed of LRPPRC, BECN1 and BCL2; the interactions prevent BECN1 from forming an autophagy-inducing complex with PIK3C3. Interacts with CECR2, HEBP2, MAP1S and UXT. Interacts with PPARGC1A. Interacts with FOXO1. Interacts (via N-terminus) with EIF4E; the interaction promotes association of EIF4E with 4ESE-containing mRNAs. Interacts with exportin XPO1/CRM1; interacts both alone and in complex with EIF4E and 4ESE-containing mRNAs to form an EIF4E-dependent mRNA export complex. Interacts with importin IPO8; the interaction occurs when LRPPRC is in its RNA-free form and returns LRPPRC to the nucleus for further export rounds. Interacts with BECN1. Interacts with Aedes aegypti venom allergen-1; the interaction interrupts BECN1 and LRPPRC association. In terms of tissue distribution, expressed ubiquitously. Expression is highest in heart, skeletal muscle, kidney and liver, intermediate in brain, non-mucosal colon, spleen and placenta, and lowest in small intestine, thymus, lung and peripheral blood leukocytes.

Its subcellular location is the mitochondrion. The protein resides in the nucleus. The protein localises to the nucleoplasm. It is found in the nucleus inner membrane. It localises to the nucleus outer membrane. In terms of biological role, may play a role in RNA metabolism in both nuclei and mitochondria. In the nucleus binds to HNRPA1-associated poly(A) mRNAs and is part of nmRNP complexes at late stages of mRNA maturation which are possibly associated with nuclear mRNA export. Positively modulates nuclear export of mRNAs containing the EIF4E sensitivity element (4ESE) by binding simultaneously to both EIF4E and the 4ESE and acting as a platform for assembly for the RNA export complex. Also binds to exportin XPO1/CRM1 to engage the nuclear pore and traffic the bound mRNAs to the cytoplasm. May bind mature mRNA in the nucleus outer membrane. In mitochondria binds to poly(A) mRNA. Plays a role in translation or stability of mitochondrially encoded cytochrome c oxidase (COX) subunits. May be involved in transcription regulation. Cooperates with PPARGC1A to regulate certain mitochondrially encoded genes and gluconeogenic genes and may regulate docking of PPARGC1A to transcription factors. Seems to be involved in the transcription regulation of the multidrug-related genes MDR1 and MVP. Part of a nuclear factor that binds to the invMED1 element of MDR1 and MVP gene promoters. Binds single-stranded DNA. Required for maintaining mitochondrial potential. Suppresses the initiation of basal levels of autophagy and mitophagy by sustaining BCL2 levels. The protein is Leucine-rich PPR motif-containing protein, mitochondrial (LRPPRC) of Homo sapiens (Human).